The chain runs to 331 residues: Anthranilate phosphoribosyltransferase (331 aa).

5-phospho-alpha-D-ribose 1-diphosphate contacts are provided by residues G79, 82–83 (GD), T87, 89–92 (NIST), 107–115 (KHGNYGATS), and A119. Anthranilate is bound at residue G79. S91 lines the Mg(2+) pocket. N110 serves as a coordination point for anthranilate. R165 contacts anthranilate. D223 and E224 together coordinate Mg(2+).

Belongs to the anthranilate phosphoribosyltransferase family. Homodimer. Mg(2+) serves as cofactor.

It catalyses the reaction N-(5-phospho-beta-D-ribosyl)anthranilate + diphosphate = 5-phospho-alpha-D-ribose 1-diphosphate + anthranilate. Its pathway is amino-acid biosynthesis; L-tryptophan biosynthesis; L-tryptophan from chorismate: step 2/5. Functionally, catalyzes the transfer of the phosphoribosyl group of 5-phosphorylribose-1-pyrophosphate (PRPP) to anthranilate to yield N-(5'-phosphoribosyl)-anthranilate (PRA). The protein is Anthranilate phosphoribosyltransferase of Bacteroides fragilis (strain ATCC 25285 / DSM 2151 / CCUG 4856 / JCM 11019 / LMG 10263 / NCTC 9343 / Onslow / VPI 2553 / EN-2).